Reading from the N-terminus, the 515-residue chain is Bifunctional purine biosynthesis protein PurH (515 aa).

One can recognise an MGS-like domain in the interval 1–145 (MTKRALISVS…KNHASVTVVV (145 aa)).

Belongs to the PurH family.

The catalysed reaction is (6R)-10-formyltetrahydrofolate + 5-amino-1-(5-phospho-beta-D-ribosyl)imidazole-4-carboxamide = 5-formamido-1-(5-phospho-D-ribosyl)imidazole-4-carboxamide + (6S)-5,6,7,8-tetrahydrofolate. It carries out the reaction IMP + H2O = 5-formamido-1-(5-phospho-D-ribosyl)imidazole-4-carboxamide. It participates in purine metabolism; IMP biosynthesis via de novo pathway; 5-formamido-1-(5-phospho-D-ribosyl)imidazole-4-carboxamide from 5-amino-1-(5-phospho-D-ribosyl)imidazole-4-carboxamide (10-formyl THF route): step 1/1. It functions in the pathway purine metabolism; IMP biosynthesis via de novo pathway; IMP from 5-formamido-1-(5-phospho-D-ribosyl)imidazole-4-carboxamide: step 1/1. The protein is Bifunctional purine biosynthesis protein PurH of Streptococcus pyogenes serotype M3 (strain ATCC BAA-595 / MGAS315).